A 313-amino-acid polypeptide reads, in one-letter code: Epoxide hydrolase 1 (313 aa).

In terms of domain architecture, AB hydrolase-1 spans 25-299 (PAVLFLHGFP…AAHFINQEKA (275 aa)). The Nucleophile role is filled by aspartate 100. Tyrosine 149 is a binding site for an epoxide. Catalysis depends on tyrosine 227, which acts as the Proton donor. Residue histidine 292 is the Proton acceptor of the active site.

The protein belongs to the AB hydrolase superfamily. Epoxide hydrolase family. In terms of assembly, homodimer. As to expression, highly expressed in fruits 15 days after anthesis (15-DAA).

It catalyses the reaction an epoxide + H2O = an ethanediol. The enzyme catalyses (24S)-24,25-epoxycucurbitadienol + H2O = (24R)-24,25-dihydroxycucurbitadienol. The protein operates within secondary metabolite biosynthesis; terpenoid biosynthesis. Functionally, epoxide hydrolase involved in the biosynthesis of cucurbitacin and mogroside tetracyclic triterpene natural products (e.g. siamenoside I and mogrosides IV, V and VI). Cucurbitacins have cytotoxic properties and exhibit deterrent taste as a defense barrier against herbivores. Mogrosides are nonsugar highly oxygenated compounds used as high-intensity zero-calorie sweeteners; they also possess pharmacological properties such as regulating immunity, lowering blood sugar and lipid levels, protecting the liver, and acting as antioxidants and antitumor agents. Catalyzes the hydrolysis of aromatic epoxide-containing substrates, such as the conversion of 24,25-epoxycucurbitadienol to 24,25-dihydroxycucurbitadienol. This is Epoxide hydrolase 1 from Siraitia grosvenorii (Monk's fruit).